Here is a 188-residue protein sequence, read N- to C-terminus: Elongation factor P (188 aa).

Lys-34 carries the post-translational modification N6-(3,6-diaminohexanoyl)-5-hydroxylysine.

The protein belongs to the elongation factor P family. Post-translationally, may be beta-lysylated on the epsilon-amino group of Lys-34 by the combined action of EpmA and EpmB, and then hydroxylated on the C5 position of the same residue by EpmC (if this protein is present). Lysylation is critical for the stimulatory effect of EF-P on peptide-bond formation. The lysylation moiety may extend toward the peptidyltransferase center and stabilize the terminal 3-CCA end of the tRNA. Hydroxylation of the C5 position on Lys-34 may allow additional potential stabilizing hydrogen-bond interactions with the P-tRNA.

It is found in the cytoplasm. It participates in protein biosynthesis; polypeptide chain elongation. Functionally, involved in peptide bond synthesis. Alleviates ribosome stalling that occurs when 3 or more consecutive Pro residues or the sequence PPG is present in a protein, possibly by augmenting the peptidyl transferase activity of the ribosome. Modification of Lys-34 is required for alleviation. This chain is Elongation factor P, found in Pasteurella multocida (strain Pm70).